The sequence spans 328 residues: Embigin (328 aa).

A signal peptide spans 1-33 (MRSHTGLRALVAPGCSLLLLYLLAATRPDRAVG). Topologically, residues 34 to 264 (DPADSAFTSL…VLSFMVPLKP (231 aa)) are extracellular. N-linked (GlcNAc...) asparagine glycans are attached at residues asparagine 55, asparagine 62, asparagine 75, asparagine 100, asparagine 117, asparagine 189, asparagine 196, asparagine 214, and asparagine 219. 2 Ig-like domains span residues 67 to 160 (EQTR…RVPK) and 159 to 254 (PKVH…IKLV). Disulfide bonds link cysteine 88–cysteine 144 and cysteine 180–cysteine 238. Residues 265 to 285 (FLAIIAEVILLVAIILLCEVY) form a helical membrane-spanning segment. Residues 286–328 (TQKKKNDPDDGKEFEQIEQLKSDDSNGIENNVPRYRKTDSGDQ) are Cytoplasmic-facing. The span at 289 to 309 (KKNDPDDGKEFEQIEQLKSDD) shows a compositional bias: basic and acidic residues. The disordered stretch occupies residues 289 to 328 (KKNDPDDGKEFEQIEQLKSDDSNGIENNVPRYRKTDSGDQ). Serine 310 is modified (phosphoserine).

As to quaternary structure, interacts with SLC16A1, SLC16A6 and SLC16A7. N-glycosylated. In terms of tissue distribution, detected in prostate, mammary gland and erythrocytes (at protein level). Detected in testis, brain, prostate, heart, kidney, liver, mammary gland and lung.

The protein localises to the cell membrane. Its subcellular location is the synapse. Functionally, plays a role in the outgrowth of motoneurons and in the formation of neuromuscular junctions. Following muscle denervation, promotes nerve terminal sprouting and the formation of additional acetylcholine receptor clusters at synaptic sites without affecting terminal Schwann cell number or morphology. Delays the retraction of terminal sprouts following re-innervation of denervated endplates. Plays a role in targeting the monocarboxylate transporters SLC16A1, SLC16A6 and SLC16A7 to the cell membrane. The protein is Embigin (Emb) of Rattus norvegicus (Rat).